We begin with the raw amino-acid sequence, 297 residues long: GTPase Era (297 aa).

The 169-residue stretch at 3 to 171 (KSGFVSIVGR…IKVIQNYLEE (169 aa)) folds into the Era-type G domain. A G1 region spans residues 11–18 (GRPNVGKS). 11 to 18 (GRPNVGKS) contacts GTP. The interval 37 to 41 (QTTRN) is G2. A G3 region spans residues 58–61 (DTPG). GTP-binding positions include 58-62 (DTPGI) and 120-123 (NKID). The interval 120–123 (NKID) is G4. The tract at residues 150–152 (ISA) is G5. In terms of domain architecture, KH type-2 spans 194-280 (IREKVLHYLN…NLQLWVKVKE (87 aa)).

This sequence belongs to the TRAFAC class TrmE-Era-EngA-EngB-Septin-like GTPase superfamily. Era GTPase family. Monomer.

The protein resides in the cytoplasm. The protein localises to the cell membrane. In terms of biological role, an essential GTPase that binds both GDP and GTP, with rapid nucleotide exchange. Plays a role in 16S rRNA processing and 30S ribosomal subunit biogenesis and possibly also in cell cycle regulation and energy metabolism. In Clostridioides difficile (strain 630) (Peptoclostridium difficile), this protein is GTPase Era.